A 1357-amino-acid polypeptide reads, in one-letter code: DNA-directed RNA polymerase subunit beta (1357 aa).

Belongs to the RNA polymerase beta chain family. The RNAP catalytic core consists of 2 alpha, 1 beta, 1 beta' and 1 omega subunit. When a sigma factor is associated with the core the holoenzyme is formed, which can initiate transcription.

The enzyme catalyses RNA(n) + a ribonucleoside 5'-triphosphate = RNA(n+1) + diphosphate. Its function is as follows. DNA-dependent RNA polymerase catalyzes the transcription of DNA into RNA using the four ribonucleoside triphosphates as substrates. The sequence is that of DNA-directed RNA polymerase subunit beta from Pseudomonas syringae pv. tomato (strain ATCC BAA-871 / DC3000).